A 167-amino-acid polypeptide reads, in one-letter code: MGTVNNAIRDSVLFTTADSIINWSRSSALWPETFGIACCAIEMISAGCARYDLDRFGVVFRPSPRQSDVMIIAGTVTRKFAPVVRRLYDQMPEPRWVIAMGTCAISGGVYNTYAVVQGSETFVPVDVHVPGCPPRPEALMHGFLLLQEKIKRSRALAGTPLDRVIAS.

Positions 38, 39, 103, and 132 each coordinate [4Fe-4S] cluster.

Belongs to the complex I 20 kDa subunit family. NDH-1 is composed of 14 different subunits. Subunits NuoB, C, D, E, F, and G constitute the peripheral sector of the complex. [4Fe-4S] cluster serves as cofactor.

It localises to the cell inner membrane. It catalyses the reaction a quinone + NADH + 5 H(+)(in) = a quinol + NAD(+) + 4 H(+)(out). In terms of biological role, NDH-1 shuttles electrons from NADH, via FMN and iron-sulfur (Fe-S) centers, to quinones in the respiratory chain. The immediate electron acceptor for the enzyme in this species is believed to be ubiquinone. Couples the redox reaction to proton translocation (for every two electrons transferred, four hydrogen ions are translocated across the cytoplasmic membrane), and thus conserves the redox energy in a proton gradient. The chain is NADH-quinone oxidoreductase subunit B 2 from Rhizobium etli (strain CIAT 652).